Reading from the N-terminus, the 384-residue chain is Urea transporter 1 (384 aa).

The next 5 helical transmembrane spans lie at Ile-61–Leu-81, Pro-85–Leu-105, Ala-111–Phe-131, Phe-138–Ala-158, and Leu-168–His-188. N-linked (GlcNAc...) asparagine glycosylation occurs at Asn-206. 4 consecutive transmembrane segments (helical) span residues Leu-250 to Ala-270, Gly-279 to Leu-299, Leu-305 to Met-325, and Ala-327 to Leu-347.

This sequence belongs to the urea transporter family. As to quaternary structure, homotrimer; each subunit contains a pore through which urea permeates. Identified in a complex with STOM. As to expression, expressed in brain, spleen, kidney, testis and lung, with highest levels in brain.

It is found in the cell membrane. The protein localises to the basolateral cell membrane. It carries out the reaction urea(in) = urea(out). Mediates the transport of urea driven by a concentration gradient across the cell membrane. Mediates the transport of urea across the cell membranes of erythrocytes and the renal inner medullary collecting duct which is critical to the urinary concentrating mechanism. Facilitates water transport in erythrocytes. This chain is Urea transporter 1 (Slc14a1), found in Rattus norvegicus (Rat).